Consider the following 414-residue polypeptide: Enterobactin exporter EntS (414 aa).

The Cytoplasmic segment spans residues 1-21 (MNRQSWLLNLSLLKTHPAFRA). A helical transmembrane segment spans residues 22-42 (VFLARFISIVSLGLLGVAVPV). Topologically, residues 43-55 (QIQMMTHSTWQVG) are periplasmic. A helical transmembrane segment spans residues 56-76 (LSVTLTGGAMFIGLMVGGVLA). Over 77–83 (DRYERKK) the chain is Cytoplasmic. The helical transmembrane segment at 84-104 (VILLARGTCGIGFIGLCVNSL) threads the bilayer. The Periplasmic segment spans residues 105 to 109 (LPEPS). The helical transmembrane segment at 110–130 (LLAIYLLGLWDGFFASLGVTA) threads the bilayer. The Cytoplasmic segment spans residues 131 to 156 (LLAATPALVGRENLMQAGAITMLTVR). Residues 157–177 (LGSVISPMLGGILLASGGVAW) traverse the membrane as a helical segment. Position 178 (Asn178) is a topological domain, periplasmic. Residues 179 to 199 (YGLAAAGTFITLLPLLTLPRL) form a helical membrane-spanning segment. Over 200–218 (PVPPQPRENPFIALLAAFR) the chain is Cytoplasmic. Residues 219–239 (FLLASPLIGGIALLGGLVTMA) traverse the membrane as a helical segment. Over 240–256 (SAVRVLYPALAMSWQMS) the chain is Periplasmic. The chain crosses the membrane as a helical span at residues 257 to 277 (AAQIGLLYAAIPLGAAIGALT). At 278-287 (SGQLAHSVRP) the chain is on the cytoplasmic side. The helical transmembrane segment at 288-307 (GLIMLVSTVGSFLAVGLFAI) threads the bilayer. Residues 308-313 (MPVWTA) are Periplasmic-facing. The chain crosses the membrane as a helical span at residues 314–336 (GVICLALFGWLSAISSLLQYTLL). The Cytoplasmic portion of the chain corresponds to 337 to 356 (QTQTPENMLGRMNGLWTAQN). A helical membrane pass occupies residues 357-377 (VTGDAIGAALLGGLGAMMTPV). Ala378 is a topological domain (periplasmic). The helical transmembrane segment at 379-399 (SASVSGFGLVIIGLLLLLVLG) threads the bilayer. The Cytoplasmic segment spans residues 400–414 (ELRRFRQTPPVSDAG).

The protein belongs to the major facilitator superfamily. EntS (TC 2.A.1.38) family.

It is found in the cell inner membrane. In terms of biological role, component of an export pathway for enterobactin. In Salmonella choleraesuis (strain SC-B67), this protein is Enterobactin exporter EntS.